We begin with the raw amino-acid sequence, 137 residues long: Peptidyl-tRNA hydrolase ArfB (137 aa).

Positions 102–137 (EKKRRPTKPTLGSKTRRLEGKARRSTVKAGRGKVDF) are disordered.

The protein belongs to the prokaryotic/mitochondrial release factor family. In terms of assembly, associated with 70S ribosomes and polysomes.

The protein localises to the cytoplasm. It catalyses the reaction an N-acyl-L-alpha-aminoacyl-tRNA + H2O = an N-acyl-L-amino acid + a tRNA + H(+). Rescues stalled ribosomes. Can hydrolyze peptidyl-tRNA on ribosomes stalled by both non-stop mRNAs and mRNAs that contain rare codon clusters. The polypeptide is Peptidyl-tRNA hydrolase ArfB (arfB) (Pseudomonas putida (Arthrobacter siderocapsulatus)).